Reading from the N-terminus, the 562-residue chain is Glutamate--tRNA ligase (562 aa).

A 'HIGH' region motif is present at residues 101 to 111 (PEPNGYPHIGH).

Belongs to the class-I aminoacyl-tRNA synthetase family. Glutamate--tRNA ligase type 2 subfamily.

The protein localises to the cytoplasm. It carries out the reaction tRNA(Glu) + L-glutamate + ATP = L-glutamyl-tRNA(Glu) + AMP + diphosphate. Its function is as follows. Catalyzes the attachment of glutamate to tRNA(Glu) in a two-step reaction: glutamate is first activated by ATP to form Glu-AMP and then transferred to the acceptor end of tRNA(Glu). This is Glutamate--tRNA ligase from Cenarchaeum symbiosum (strain A).